Here is a 357-residue protein sequence, read N- to C-terminus: Phosphoribosylformylglycinamidine cyclo-ligase (357 aa).

This sequence belongs to the AIR synthase family.

The protein resides in the cytoplasm. The enzyme catalyses 2-formamido-N(1)-(5-O-phospho-beta-D-ribosyl)acetamidine + ATP = 5-amino-1-(5-phospho-beta-D-ribosyl)imidazole + ADP + phosphate + H(+). It participates in purine metabolism; IMP biosynthesis via de novo pathway; 5-amino-1-(5-phospho-D-ribosyl)imidazole from N(2)-formyl-N(1)-(5-phospho-D-ribosyl)glycinamide: step 2/2. The sequence is that of Phosphoribosylformylglycinamidine cyclo-ligase from Rhizobium leguminosarum bv. trifolii (strain WSM2304).